Reading from the N-terminus, the 271-residue chain is Methyltransferase psoC (271 aa).

It belongs to the methyltransferase superfamily. LaeA methyltransferase family.

Its pathway is secondary metabolite biosynthesis. Methyltransferase; part of the gene cluster that mediates the biosynthesis of pseurotin A, a competitive inhibitor of chitin synthase and an inducer of nerve-cell proliferation. The PKS-NRPS hybrid synthetase psoA is responsible for the biosynthesis of azaspirene, one of the first intermediates having the 1-oxa-7-azaspiro[4,4]-non-2-ene-4,6-dione core of pseurotin, via condensation of one acetyl-CoA, 4 malonyl-CoA, and a L-phenylalanine molecule. The dual-functional monooxygenase/methyltransferase psoF seems to be involved in the addition of the C3 methyl group onto the pseurotin scaffold. Azaspirene is then converted to synerazol through 4 steps including oxidation of C17 by the cytochrome P450 monooxygenase psoD, O-methylation of the hydroxy group of C8 by the methyltransferase psoC, and the trans-to-cis isomerization of the C13 olefin by the glutathione S-transferase psoE. The fourth step of synerazol production is performed by the dual-functional monooxygenase/methyltransferase psoF which seems to catalyze the epoxidation of the intermediate deepoxy-synerazol. Synerazol can be attacked by a water molecule nonenzymatically at two different positions to yield two diol products, pseurotin A and pseurotin D. This is Methyltransferase psoC from Aspergillus fumigatus (strain ATCC MYA-4609 / CBS 101355 / FGSC A1100 / Af293) (Neosartorya fumigata).